Consider the following 466-residue polypeptide: Cytochrome P450 85A (466 aa).

A helical membrane pass occupies residues 2–22; the sequence is ALFMAILGVLVLLLCLCSALL. Cysteine 414 contributes to the heme binding site.

The protein belongs to the cytochrome P450 family. It depends on heme as a cofactor.

The protein localises to the membrane. Functionally, catalyzes the C6-oxidation step in brassinosteroids biosynthesis. The polypeptide is Cytochrome P450 85A (Phaseolus vulgaris (Kidney bean)).